Reading from the N-terminus, the 467-residue chain is Methylenetetrahydrofolate--tRNA-(uracil-5-)-methyltransferase TrmFO (467 aa).

10–15 (GGGMAG) is an FAD binding site.

Belongs to the MnmG family. TrmFO subfamily. FAD serves as cofactor.

It localises to the cytoplasm. It catalyses the reaction uridine(54) in tRNA + (6R)-5,10-methylene-5,6,7,8-tetrahydrofolate + NADH + H(+) = 5-methyluridine(54) in tRNA + (6S)-5,6,7,8-tetrahydrofolate + NAD(+). The catalysed reaction is uridine(54) in tRNA + (6R)-5,10-methylene-5,6,7,8-tetrahydrofolate + NADPH + H(+) = 5-methyluridine(54) in tRNA + (6S)-5,6,7,8-tetrahydrofolate + NADP(+). In terms of biological role, catalyzes the folate-dependent formation of 5-methyl-uridine at position 54 (M-5-U54) in all tRNAs. This Hyphomonas neptunium (strain ATCC 15444) protein is Methylenetetrahydrofolate--tRNA-(uracil-5-)-methyltransferase TrmFO.